The chain runs to 329 residues: D-threo-aldose 1-dehydrogenase (329 aa).

Tyr58 serves as the catalytic Proton donor. His145 lines the substrate pocket.

The protein belongs to the aldo/keto reductase family.

It catalyses the reaction a D-threo-aldose + NAD(+) = a D-threo-aldono-1,5-lactone + NADH + H(+). With respect to regulation, inhibited strongly by Hg(2+), Cd(2+) and para-chloromercuribenzoic acid (PCMB) and weakly by Zn(2+) and iodoacetamide. Also inhibited strongly by L-xylose but not D-glucose. Functionally, catalyzes the oxidation of L-fucose to L-fuconolactone in the presence of NADP(+). Also active against L-galactose and, to a much lesser degree, D-arabinose. Uses NADP(+) as a hydrogen acceptor much more efficiently than NAD(+). This Pseudomonas sp protein is D-threo-aldose 1-dehydrogenase.